We begin with the raw amino-acid sequence, 601 residues long: uncharacterized protein (601 aa).

The span at 24-35 shows a compositional bias: basic residues; the sequence is RKSNVVLKKNKG. 2 disordered regions span residues 24–106 and 171–219; these read RKSN…LKLD and YGND…PREE. Over residues 54–81 the composition is skewed to polar residues; that stretch reads SQFSSRDNFRTTQTQASSSSEPSDNTNR. The segment covering 92–106 has biased composition (basic and acidic residues); sequence TPKKEESNAEKLKLD. Residues Ser-236 and Ser-238 each carry the phosphoserine modification. The disordered stretch occupies residues 260 to 283; that stretch reads RKRKVLSSSSEDDESSSPEDLLKP.

Its subcellular location is the nucleus. This is an uncharacterized protein from Schizosaccharomyces pombe (strain 972 / ATCC 24843) (Fission yeast).